The following is a 989-amino-acid chain: Translation initiation factor IF-2 (989 aa).

Disordered regions lie at residues 28–60 and 97–397; these read GVTK…TDAD and VRRD…DQNT. Composition is skewed to basic and acidic residues over residues 40–60 and 122–178; these read ETDK…TDAD and ELQR…EAAK. The span at 182 to 223 shows a compositional bias: low complexity; it reads AAAAEAAAREQQTQASKPAQAAQPAAAKAEPVAAKAAEPVVA. The segment covering 231–280 has biased composition (basic and acidic residues); the sequence is ERAAAERAAQREAAKKAEDAARQAAEKARAEQEEIAKRRAAAEAEARAIR. The span at 318–345 shows a compositional bias: low complexity; it reads RPAGEAPARPAAKKPAAAAPAATTTPSA. The segment covering 374–387 has biased composition (gly residues); the sequence is TSGGVDRGWRGGPK. A tr-type G domain is found at 489 to 658; it reads PRPPVVTVMG…LLQAEVLELK (170 aa). The interval 498–505 is G1; that stretch reads GHVDHGKT. A GTP-binding site is contributed by 498–505; sequence GHVDHGKT. Positions 523–527 are G2; the sequence is GITQH. Residues 544–547 are G3; it reads DTPG. GTP-binding positions include 544–548 and 598–601; these read DTPGH and NKID. Residues 598–601 are G4; that stretch reads NKID. The interval 634 to 636 is G5; that stretch reads SAK.

This sequence belongs to the TRAFAC class translation factor GTPase superfamily. Classic translation factor GTPase family. IF-2 subfamily.

It localises to the cytoplasm. In terms of biological role, one of the essential components for the initiation of protein synthesis. Protects formylmethionyl-tRNA from spontaneous hydrolysis and promotes its binding to the 30S ribosomal subunits. Also involved in the hydrolysis of GTP during the formation of the 70S ribosomal complex. The chain is Translation initiation factor IF-2 from Paraburkholderia xenovorans (strain LB400).